The primary structure comprises 223 residues: uncharacterized protein (223 aa).

In terms of domain architecture, HTH tetR-type spans 11–71 (EATFESFIDA…YLLEKRQMKK (61 aa)). A DNA-binding region (H-T-H motif) is located at residues 34–53 (SVEDISRAAGYSKGAFYVHF).

This is an uncharacterized protein from Bacillus subtilis (strain 168).